Consider the following 891-residue polypeptide: DNA mismatch repair protein MutS (891 aa).

634 to 641 (GPNMGGKS) provides a ligand contact to ATP.

The protein belongs to the DNA mismatch repair MutS family.

Functionally, this protein is involved in the repair of mismatches in DNA. It is possible that it carries out the mismatch recognition step. This protein has a weak ATPase activity. This chain is DNA mismatch repair protein MutS, found in Burkholderia mallei (strain NCTC 10247).